A 97-amino-acid chain; its full sequence is Osteocalcin (97 aa).

The first 18 residues, methionine 1–threonine 18, serve as a signal peptide directing secretion. The propeptide occupies serine 19–arginine 52. Residues alanine 53–glycine 93 enclose the Gla domain. Ca(2+) contacts are provided by glutamate 63, glutamate 67, glutamate 70, and glutamate 76. 4-carboxyglutamate occurs at positions 63, 67, and 70. The cysteines at positions 69 and 75 are disulfide-linked.

This sequence belongs to the osteocalcin/matrix Gla protein family. In terms of processing, gamma-carboxyglutamate residues are formed by vitamin K dependent carboxylation by GGCX. These residues are essential for the binding of calcium.

The protein localises to the secreted. In terms of biological role, the carboxylated form is one of the main organic components of the bone matrix, which constitutes 1-2% of the total bone protein. The carboxylated form binds strongly to apatite and calcium. This is Osteocalcin (bglap) from Sparus aurata (Gilthead sea bream).